Here is a 190-residue protein sequence, read N- to C-terminus: Elongation factor P 1 (190 aa).

The protein belongs to the elongation factor P family.

It is found in the cytoplasm. It functions in the pathway protein biosynthesis; polypeptide chain elongation. Functionally, involved in peptide bond synthesis. Stimulates efficient translation and peptide-bond synthesis on native or reconstituted 70S ribosomes in vitro. Probably functions indirectly by altering the affinity of the ribosome for aminoacyl-tRNA, thus increasing their reactivity as acceptors for peptidyl transferase. The sequence is that of Elongation factor P 1 (efp1) from Lactobacillus johnsonii (strain CNCM I-12250 / La1 / NCC 533).